A 1052-amino-acid polypeptide reads, in one-letter code: Suppressor of RPS4-RLD 1 (1052 aa).

An N-acetylalanine modification is found at Ala2. TPR repeat units follow at residues 39–72 (ILDICNRAFCYNQLELHKHVIKDCDKALLLEPFA) and 74–106 (QAFILKGRALLALGRKQEAVLVLEQGYKSALQQ). Residues 107-136 (TADVKQLLELEELLKDARREIDGILKSHAT) adopt a coiled-coil conformation. The tract at residues 131–181 (LKSHATESPQETPAYHSEKSDEKSDKLDNHESGASSNGNSHESSSELGEQS) is disordered. The span at 146–161 (HSEKSDEKSDKLDNHE) shows a compositional bias: basic and acidic residues. The segment covering 162–181 (SGASSNGNSHESSSELGEQS) has biased composition (low complexity). TPR repeat units follow at residues 297–330 (VDFRLSRGIAQVNEGNYTKAISIFDKVLKEEPTY), 331–364 (PEALIGRGTAYAFQRELESAIADFTKAIQSNPAA), 365–398 (SEAWKRRGQARAALGEYVEAVEDLTKALVFEPNS), 400–432 (DVLHERGIVNFKSKDFTAAVKDLSICLKQEKDN), 433–466 (KSAYTYLGLAFASLGEYKKAEEAHLKSIQLDSNY), 468–500 (EAWLHLAQFYQELADHCKALECIEQVLQVDNRV), 502–534 (KAYHLRGLVFHGLGEHRKAIQELSIGLSIENTI), 535–567 (ECLYLRGSCYHAVGEYRDAVKDYDATVDVELDA), and 569–591 (EKFVLQCLAFYQKELALYTASKV). The tract at residues 704–739 (STKGTTKNGKKNRRRERTNILSQNRGGAGCSSSSFS) is disordered. The chain crosses the membrane as a helical span at residues 966–986 (GTAVTGFVVLLGLLLAANMEF).

Multimer. Interacts with EDS1. Interacts with SNC1 and RPS4. Interacts (via TPR domain) with SGT1 (via TPR domain). Interacts with the TCP transcription factors TCP8, TCP14, TCP15, TCP20, TCP22 and TCP23. Ubiquitous. Not detected in very young flowers and older siliques.

It is found in the nucleus. The protein resides in the cytoplasm. The protein localises to the perinuclear region. It localises to the membrane. Its subcellular location is the microsome. Negative regulator of effector-triggered immunity associated with the EDS1 resistance pathway. May localize its interactors to a microsomal membrane. May therefore negatively regulate RPS4 and SNC1 translocation to the nucleus. Contributes to the regulation of RPS2 and RPS4 protein levels and negatively regulates SNC1 stability. In Arabidopsis thaliana (Mouse-ear cress), this protein is Suppressor of RPS4-RLD 1.